The following is a 597-amino-acid chain: Putative diflavin flavoprotein A 3 (597 aa).

The segment at 59–254 (QRGTTANSYL…YPAQTYAPSH (196 aa)) is zinc metallo-hydrolase. Positions 283-421 (VALIYASAYG…MCEEAGTDFA (139 aa)) constitute a Flavodoxin-like domain. Positions 449–597 (LGRLVGSLCV…VHHRKSGDHY (149 aa)) are flavodoxin-reductase-like.

This sequence in the N-terminal section; belongs to the zinc metallo-hydrolase group 3 family. In the C-terminal section; belongs to the flavodoxin reductase family. The cofactor is Fe cation.

Mediates electron transfer from NADH to oxygen, reducing it to water. This modular protein has 3 redox cofactors, in other organisms the same activity requires 2 or 3 proteins. This is Putative diflavin flavoprotein A 3 (dfa3) from Synechocystis sp. (strain ATCC 27184 / PCC 6803 / Kazusa).